The following is a 265-amino-acid chain: 3-methyl-2-oxobutanoate hydroxymethyltransferase (265 aa).

Mg(2+) contacts are provided by Asp-45 and Asp-84. Residues 45 to 46 (DS), Asp-84, and Lys-112 each bind 3-methyl-2-oxobutanoate. Glu-114 contacts Mg(2+). Catalysis depends on Glu-182, which acts as the Proton acceptor.

The protein belongs to the PanB family. Homodecamer; pentamer of dimers. The cofactor is Mg(2+).

It localises to the cytoplasm. It carries out the reaction 3-methyl-2-oxobutanoate + (6R)-5,10-methylene-5,6,7,8-tetrahydrofolate + H2O = 2-dehydropantoate + (6S)-5,6,7,8-tetrahydrofolate. It participates in cofactor biosynthesis; (R)-pantothenate biosynthesis; (R)-pantoate from 3-methyl-2-oxobutanoate: step 1/2. Catalyzes the reversible reaction in which hydroxymethyl group from 5,10-methylenetetrahydrofolate is transferred onto alpha-ketoisovalerate to form ketopantoate. The protein is 3-methyl-2-oxobutanoate hydroxymethyltransferase of Baumannia cicadellinicola subsp. Homalodisca coagulata.